A 2431-amino-acid polypeptide reads, in one-letter code: Histone-lysine N-methyltransferase trr (2431 aa).

Disordered regions lie at residues 34–78, 135–201, 213–235, and 759–789; these read LQKR…STAP, DADK…ENSG, ASGA…AGTP, and QSAN…TPMN. Over residues 142-165 the composition is skewed to polar residues; sequence YRISTPRNSQSNPLLHRNTAFTSF. Composition is skewed to low complexity over residues 171 to 183, 218 to 235, and 767 to 787; these read ASSS…STAS, SSTS…AGTP, and ATST…NATP. Positions 801-805 match the LXXLL motif 1 motif; it reads LKQLL. Disordered regions lie at residues 863-895, 918-973, 1226-1292, 1404-1433, and 1478-1500; these read PVPT…GGSS, VGGE…QVKQ, HPQQ…AGGA, TSGG…KGGS, and GLVG…AEKM. Low complexity-rich tracts occupy residues 866–895, 952–970, and 1226–1241; these read TATQ…GGSS, QQQQ…SPHQ, and HPQQ…QPQN. A compositionally biased stretch (basic residues) spans 1269–1281; it reads RKRRKREVQKPRR. A compositionally biased stretch (low complexity) spans 1410-1422; sequence PASMSSAASAGSS. Gly residues predominate over residues 1423-1433; sequence SAGGGKLKGGS. Thr-1486 bears the Phosphothreonine mark. Residues Ser-1488 and Ser-1490 each carry the phosphoserine modification. The LXXLL motif 2 signature appears at 1652–1656; sequence LANLL. Positions 1790 to 1836 are disordered; the sequence is GGSAVKSSNGDSPGSFCASSTAPAEMVVKQEPEDEDEKTPSVPGNPT. Polar residues predominate over residues 1794 to 1811; the sequence is VKSSNGDSPGSFCASSTA. The C2HC pre-PHD-type zinc-finger motif lies at 1895 to 1935; it reads TRQCVFCNQRGDGQADGPSRLLNFDVDKWVHLNCALWSNGV. The PHD-type zinc-finger motif lies at 1956 to 2003; that stretch reads QACSACHQPGATIKCFKSRCNSLYHLPCAIREECVFYKNKSVHCSVHG. An LXXLL motif 3 motif is present at residues 2060–2064; it reads LSNLL. In terms of domain architecture, FYR N-terminal spans 2061-2121; it reads SNLLRVGNMT…CRYICSIAEA (61 aa). Positions 2122–2209 constitute an FYR C-terminal domain; sequence GCKPEFRIQV…ETLTDYRFKY (88 aa). Residues 2291 to 2407 form the SET domain; the sequence is NNVYLARSKI…RGEELSYDYK (117 aa). Residues 2415 to 2431 enclose the Post-SET domain; the sequence is HKIPCACGAPNCRKWMN.

Belongs to the class V-like SAM-binding methyltransferase superfamily. Histone-lysine methyltransferase family. TRX/MLL subfamily. In terms of assembly, component of the MLL3/4 complex composed at least of the catalytic subunit trr, ash2, Rbbp5, Dpy-30L1, wds, hcf, ptip, Pa1, Utx, Lpt and Ncoa6. Interacts with nuclear receptor EcR in an ecdysone-dependent manner. Interacts with ash2; the interaction stabilizes trr. In terms of tissue distribution, widely expressed.

The protein resides in the nucleus. The protein localises to the chromosome. The catalysed reaction is L-lysyl(4)-[histone H3] + 3 S-adenosyl-L-methionine = N(6),N(6),N(6)-trimethyl-L-lysyl(4)-[histone H3] + 3 S-adenosyl-L-homocysteine + 3 H(+). Histone methyltransferase that acts as a coactivator for the ecdysone receptor during development. Specifically trimethylates 'Lys-4' of histone H3, a specific tag for epigenetic transcriptional activation. Recruited by EcR in an ecdysone-dependent manner causing H3 'Lys-4' trimethylation at ecdysone-inducible promoters, leading to activate expression. Plays a central role in the developing compound eye, during the progression of the morphogenetic furrow and in post-furrow differentiation of the retinal epithelium, notably by activating expression of hh. Also required for wing and abdominal development. The polypeptide is Histone-lysine N-methyltransferase trr (trr) (Drosophila melanogaster (Fruit fly)).